The sequence spans 422 residues: Carboxypeptidase B2 (422 aa).

The first 21 residues, 1–21 (MKLHGLGILVAIILYEQHGFA), serve as a signal peptide directing secretion. Positions 22 to 113 (FQSGQVLSAL…QTFNDTVSPR (92 aa)) are cleaved as a propeptide — activation peptide. N-linked (GlcNAc...) asparagine glycans are attached at residues N43, N72, N84, and N107. One can recognise a Peptidase M14 domain in the interval 121-418 (QYHSLNEIYS…AAISKIVWHV (298 aa)). C177 and C190 are disulfide-bonded. Zn(2+) contacts are provided by H180 and E183. Substrate is bound by residues 180-183 (HARE) and R238. An N-linked (GlcNAc...) asparagine glycan is attached at N240. 2 cysteine pairs are disulfide-bonded: C249–C273 and C264–C278. Residue 255-256 (NR) participates in substrate binding. Position 309 (H309) interacts with Zn(2+). 310–311 (SY) is a substrate binding site. N-linked (GlcNAc...) asparagine glycosylation is present at N322. Substrate is bound at residue Y362. The Proton donor/acceptor role is filled by E384.

Belongs to the peptidase M14 family. It depends on Zn(2+) as a cofactor. In terms of tissue distribution, plasma; synthesized in the liver.

It is found in the secreted. It catalyses the reaction Release of C-terminal Arg and Lys from a polypeptide.. Its activity is regulated as follows. TAFI/CPB2 is unique among carboxypeptidases in that it spontaneously inactivates with a short half-life, a property that is crucial for its role in controlling blood clot lysis. The zymogen is stabilized by interactions with the activation peptide. Release of the activation peptide increases a dynamic flap mobility and in time this leads to conformational changes that disrupt the catalytic site and expose a cryptic thrombin-cleavage site present at Arg-323. Its function is as follows. Cleaves C-terminal arginine or lysine residues from biologically active peptides such as kinins or anaphylatoxins in the circulation thereby regulating their activities. Down-regulates fibrinolysis by removing C-terminal lysine residues from fibrin that has already been partially degraded by plasmin. The polypeptide is Carboxypeptidase B2 (Cpb2) (Mus musculus (Mouse)).